Consider the following 341-residue polypeptide: Thymidine kinase (341 aa).

19-26 (GAYGIGKT) is a binding site for ATP. The Proton acceptor role is filled by Glu-48. Positions 66 and 90 each coordinate substrate. Position 183 (Arg-183) interacts with ATP. Arg-189 provides a ligand contact to substrate.

It belongs to the herpesviridae thymidine kinase family. In terms of assembly, homodimer.

The catalysed reaction is thymidine + ATP = dTMP + ADP + H(+). Its function is as follows. Catalyzes the transfer of the gamma-phospho group of ATP to thymidine to generate dTMP in the salvage pathway of pyrimidine synthesis. The dTMP serves as a substrate for DNA polymerase during viral DNA replication. Allows the virus to be reactivated and to grow in non-proliferative cells lacking a high concentration of phosphorylated nucleic acid precursors. This is Thymidine kinase from Varicella-zoster virus (strain Oka vaccine) (HHV-3).